Consider the following 359-residue polypeptide: 3-dehydroquinate synthase (359 aa).

NAD(+)-binding positions include 71–76 (DGEQHK), 105–109 (GVIGD), 129–130 (TT), lysine 142, and lysine 151. Zn(2+) contacts are provided by glutamate 184, histidine 247, and histidine 264.

The protein belongs to the sugar phosphate cyclases superfamily. Dehydroquinate synthase family. It depends on NAD(+) as a cofactor. The cofactor is Co(2+). Zn(2+) serves as cofactor.

It localises to the cytoplasm. The catalysed reaction is 7-phospho-2-dehydro-3-deoxy-D-arabino-heptonate = 3-dehydroquinate + phosphate. It participates in metabolic intermediate biosynthesis; chorismate biosynthesis; chorismate from D-erythrose 4-phosphate and phosphoenolpyruvate: step 2/7. Catalyzes the conversion of 3-deoxy-D-arabino-heptulosonate 7-phosphate (DAHP) to dehydroquinate (DHQ). The protein is 3-dehydroquinate synthase of Chromobacterium violaceum (strain ATCC 12472 / DSM 30191 / JCM 1249 / CCUG 213 / NBRC 12614 / NCIMB 9131 / NCTC 9757 / MK).